Here is a 565-residue protein sequence, read N- to C-terminus: Heme/hemopexin transporter protein HuxB (565 aa).

A signal peptide spans 1–26; the sequence is MKMRPRYSVIASAVSLGFVLSKSVMA. The POTRA domain occupies 73–150; that stretch reads FPLTQVQILD…GTVKILLLKG (78 aa).

This sequence belongs to the TPS (TC 1.B.20) family.

Its subcellular location is the cell outer membrane. Its function is as follows. Likely functions in the release of soluble HxuA from the cell. Functionally, probable member of a two partner secretion pathway (TPS) in which it mediates the secretion of HuxA. The protein is Heme/hemopexin transporter protein HuxB (hxuB) of Haemophilus influenzae.